The chain runs to 86 residues: Omega-theraphotoxin-Hhn1a 1 (86 aa).

The first 21 residues, 1 to 21 (MKSIVFVALFGLALLAVVCSA), serve as a signal peptide directing secretion. The propeptide occupies 22–50 (SEDAHKELLKEVVRAMVVDKTDAVQAEER). 3 disulfide bridges follow: cysteine 52-cysteine 66, cysteine 59-cysteine 71, and cysteine 65-cysteine 78.

This sequence belongs to the neurotoxin 10 (Hwtx-1) family. 17 (Hntx-9) subfamily. In terms of tissue distribution, expressed by the venom gland.

The protein localises to the secreted. In terms of biological role, ion channel inhibitor. In Cyriopagopus hainanus (Chinese bird spider), this protein is Omega-theraphotoxin-Hhn1a 1.